Reading from the N-terminus, the 502-residue chain is Aspartyl/glutamyl-tRNA(Asn/Gln) amidotransferase subunit B (502 aa).

Belongs to the GatB/GatE family. GatB subfamily. As to quaternary structure, heterotrimer of A, B and C subunits.

The enzyme catalyses L-glutamyl-tRNA(Gln) + L-glutamine + ATP + H2O = L-glutaminyl-tRNA(Gln) + L-glutamate + ADP + phosphate + H(+). It catalyses the reaction L-aspartyl-tRNA(Asn) + L-glutamine + ATP + H2O = L-asparaginyl-tRNA(Asn) + L-glutamate + ADP + phosphate + 2 H(+). Allows the formation of correctly charged Asn-tRNA(Asn) or Gln-tRNA(Gln) through the transamidation of misacylated Asp-tRNA(Asn) or Glu-tRNA(Gln) in organisms which lack either or both of asparaginyl-tRNA or glutaminyl-tRNA synthetases. The reaction takes place in the presence of glutamine and ATP through an activated phospho-Asp-tRNA(Asn) or phospho-Glu-tRNA(Gln). This is Aspartyl/glutamyl-tRNA(Asn/Gln) amidotransferase subunit B from Ruegeria sp. (strain TM1040) (Silicibacter sp.).